We begin with the raw amino-acid sequence, 322 residues long: MTSHLKKVELHCHLEGAASPALTEAQARKYGIDISGQLRDGVYIWHDFASFLECYDKVSEVYRTEEDYALLTETYLDELAGINTIYSELIVSPDHGKRIGLGADAYISGVCEGIRRAKAKSGIEARLIVTGERHFGPESVIGAAEYAAKAGNPLITGFNLAGEERMGRVADYIRAFDIARDAGLGLTIHAGEVCGAFSVADALDAVRPARIGHGVRAIEDLDLVKRLADLGTVLEVCPGSNIALRVYPDFASHPLRRLKEAGVRVTISSDDPPFFHTSLEREYALAAEAFGFGDAEIDAMTRVAIEAAFVDEETRKALLARL.

Zn(2+) is bound by residues His-11, His-13, and His-189. Glu-192 acts as the Proton donor in catalysis. Residue Asp-270 participates in Zn(2+) binding. Asp-271 contacts substrate.

The protein belongs to the metallo-dependent hydrolases superfamily. Adenosine and AMP deaminases family. Adenine deaminase type 2 subfamily. Zn(2+) is required as a cofactor.

It catalyses the reaction adenine + H2O + H(+) = hypoxanthine + NH4(+). In terms of biological role, catalyzes the hydrolytic deamination of adenine to hypoxanthine. Plays an important role in the purine salvage pathway and in nitrogen catabolism. The chain is Adenine deaminase from Rhizobium etli (strain ATCC 51251 / DSM 11541 / JCM 21823 / NBRC 15573 / CFN 42).